A 901-amino-acid polypeptide reads, in one-letter code: MLIPSKLSRPVRLEHTVVRERLLAKLSGASNYRLALITSPAGYGKTTLISQWAAGKTELGWYSLDEGDNQPERFASYLIAAIQQATGGHCASSEVMAQKRQYASLSSLFAQLFIELAAWPRPLFLVIDDYHLITNPVIHEAMRFFLRHQPDHLTLVVLSRNLPQLGIANLRVREQLLEIGSQQLAFTHQEARQFFDCRLSQPIEPAQSNRLCDDVAGWATALQLIALSARQNTGAVHQSARRLAGINASHLSDYLVDEVLNNVDNDTRQFLLKSALLRSMNDALIARVTGEENGQMRLEEIERQGLFLQRMDDSGEWFSYHPLFGSFLRQRCQWELSTELPDIHRAAAESWMAQGFPSEAIHHALAAGDASMLRDILLNHAWGLFNHSELTLLEQSLKALPWESLLANPRLVLLQAWLMQSQHRYSEVNTLLARAEQEMKGEMDDTLHGEFNALRAQVAINDGDPDEAERLAMVALETLPLANFYSRIVATSVHGEVLHCKGDLTKSLSVMQQTELMARRHDVWHYALWSLIQQSEILFAQGFLQAAWETQEKAFTLIQEQHLEQLPLHEFLLRIRAQLLWAWARLDEAEACARTGMTVLANYQPQQQLQCLALLVQCSLARGDLDNARSHLNRLENLLGNGHYHSDWVSNADKVRVIYWQMTGDKAAAAAWLRQTPKPAFANNHFLQSQWRNIARVQILLGDYEPAEMVLEELNENARSLRLMSDINRNLLLLNQLYWNAGRKSDAQRVLMEALTLANRTGFISHFVIEGEAMAQQLRQLLQLNTLPEIEQHRAQRILRDINQHHRHKFAHFDENFVNKLLNHPEVPELIRTSPLTQREWQVLGLIYSGYSNDQIAGELDVAATTIKTHIRNLYQKLGVAHRQDAVQHAQQLLKMMGYGV.

39–46 lines the ATP pocket; it reads SPAGYGKT. The 66-residue stretch at 829–894 folds into the HTH luxR-type domain; sequence ELIRTSPLTQ…DAVQHAQQLL (66 aa). Positions 853–872 form a DNA-binding region, H-T-H motif; it reads NDQIAGELDVAATTIKTHIR.

It belongs to the MalT family. Monomer in solution. Oligomerizes to an active state in the presence of the positive effectors ATP and maltotriose.

Activated by ATP and maltotriose, which are both required for DNA binding. In terms of biological role, positively regulates the transcription of the maltose regulon whose gene products are responsible for uptake and catabolism of malto-oligosaccharides. Specifically binds to the promoter region of its target genes, recognizing a short DNA motif called the MalT box. The chain is HTH-type transcriptional regulator MalT from Cronobacter sakazakii (strain ATCC BAA-894) (Enterobacter sakazakii).